The following is a 79-amino-acid chain: Defensin-like protein 109 (79 aa).

Residues 1 to 24 (MDFTKKILVVFAFTIMLGISSVHC) form the signal peptide. 4 disulfide bridges follow: cysteine 41/cysteine 76, cysteine 47/cysteine 68, cysteine 54/cysteine 74, and cysteine 58/cysteine 75.

The protein belongs to the DEFL family.

The protein localises to the secreted. This is Defensin-like protein 109 from Arabidopsis thaliana (Mouse-ear cress).